The sequence spans 186 residues: Small ribosomal subunit protein uS5 (186 aa).

The region spanning 20-83 (FVDKLVHINR…EAAKRDMIFV (64 aa)) is the S5 DRBM domain.

It belongs to the universal ribosomal protein uS5 family. Part of the 30S ribosomal subunit. Contacts proteins S4 and S8.

Its function is as follows. With S4 and S12 plays an important role in translational accuracy. In terms of biological role, located at the back of the 30S subunit body where it stabilizes the conformation of the head with respect to the body. This Brucella abortus (strain S19) protein is Small ribosomal subunit protein uS5.